The chain runs to 560 residues: MAGPQPLALQLEQLLNPRPSEADPEADPEEATAARVIDRFDEGEDGEGDFLVVGSIRKLASASLLDTDKRYCGKTTSRKAWNEDHWEQTLPGSSDEEISDEEGSGDEDSEGLGLEEYDEDDLGAAEEQECGDHRESKKSRSHSAKTPGFSVQSISDFEKFTKGMDDLGSSEEEEDEESGMEEGDDAEDSQGESEEDRAGDRNSEDDGVVMTFSSVKVSEEVEKGRAVKNQIALWDQLLEGRIKLQKALLTTNQLPQPDVFPLFKDKGGPEFSSALKNSHKALKALLRSLVGLQEELLFQYPDTRYLVDGTKPNAGSEEISSEDDELVEEKKQQRRRVPAKRKLEMEDYPSFMAKRFADFTVYRNRTLQKWHDKTKLASGKLGKGFGAFERSILTQIDHILMDKERLLRRTQTKRSVYRVLGKPEPAAQPVPESLPGEPEILPQAPANAHLKDLDEEIFDDDDFYHQLLRELIERKTSSLDPNDQVAMGRQWLAIQKLRSKIHKKVDRKASKGRKLRFHVLSKLLSFMAPIDHTTMNDDARTELYRSLFGQLHPPDEGHGD.

Ala2 bears the N-acetylalanine mark. Ser61 and Ser63 each carry phosphoserine. The interval 76–208 (TSRKAWNEDH…GDRNSEDDGV (133 aa)) is disordered. Positions 94–129 (SDEEISDEEGSGDEDSEGLGLEEYDEDDLGAAEEQE) are enriched in acidic residues. Ser150 and Ser155 each carry phosphoserine. Residues 156-165 (DFEKFTKGMD) are compositionally biased toward basic and acidic residues. A compositionally biased stretch (acidic residues) spans 168 to 195 (GSSEEEEDEESGMEEGDDAEDSQGESEE). Ser203, Ser273, Ser316, Ser320, and Ser321 each carry phosphoserine. A POLR2J binding region spans residues 273 to 315 (SALKNSHKALKALLRSLVGLQEELLFQYPDTRYLVDGTKPNAG). The disordered stretch occupies residues 309–333 (GTKPNAGSEEISSEDDELVEEKKQQ). Positions 316–372 (SEEISSEDDELVEEKKQQRRRVPAKRKLEMEDYPSFMAKRFADFTVYRNRTLQKWHD) are RB1 binding. The tract at residues 373 to 472 (KTKLASGKLG…FYHQLLRELI (100 aa)) is RB1 and SP1 binding.

Belongs to the AATF family. In terms of assembly, part of the small subunit (SSU) processome, composed of more than 70 proteins and the RNA chaperone small nucleolar RNA (snoRNA) U3. Interacts with POLR2J, RB1/RB, RBL1/P107 and RBL2/P130. Interacts with PAWR and SP1. May also bind MAPT. Hyperphosphorylated during the G1/S phase transition. In terms of tissue distribution, ubiquitously expressed. Expressed at high levels in brain, heart, kidney, placenta and thymus.

It is found in the nucleus. It localises to the nucleolus. Functionally, part of the small subunit (SSU) processome, first precursor of the small eukaryotic ribosomal subunit. During the assembly of the SSU processome in the nucleolus, many ribosome biogenesis factors, an RNA chaperone and ribosomal proteins associate with the nascent pre-rRNA and work in concert to generate RNA folding, modifications, rearrangements and cleavage as well as targeted degradation of pre-ribosomal RNA by the RNA exosome. May function as a general inhibitor of the histone deacetylase HDAC1. Binding to the pocket region of RB1 may displace HDAC1 from RB1/E2F complexes, leading to activation of E2F target genes and cell cycle progression. Conversely, displacement of HDAC1 from SP1 bound to the CDKN1A promoter leads to increased expression of this CDK inhibitor and blocks cell cycle progression. Also antagonizes PAWR mediated induction of aberrant amyloid peptide production in Alzheimer disease (presenile and senile dementia), although the molecular basis for this phenomenon has not been described to date. This Homo sapiens (Human) protein is Protein AATF.